We begin with the raw amino-acid sequence, 119 residues long: Phytosulfokines 2 (119 aa).

Positions 1–34 (MSTTRGVSSSSAAAALALLLLFALCFFSFHFAAA) are cleaved as a signal peptide. Positions 35–109 (ARAVPRDEHQ…RRLLSDAHLD (75 aa)) are excised as a propeptide. Y110 and Y112 each carry sulfotyrosine. Positions 115-119 (HKNKP) are excised as a propeptide.

The protein belongs to the phytosulfokine family. In terms of processing, sulfation is important for activity and for the binding to a putative membrane receptor. PSK-alpha is produced by endopeptidase digestion. PSK-beta is produced from PSK-alpha by exopeptidase digestion.

Its subcellular location is the secreted. Functionally, promotes plant cell differentiation, organogenesis and somatic embryogenesis as well as cell proliferation. In Oryza sativa subsp. japonica (Rice), this protein is Phytosulfokines 2 (PSK2).